A 164-amino-acid polypeptide reads, in one-letter code: Phosphopantetheine adenylyltransferase (164 aa).

The protein belongs to the eukaryotic CoaD family.

It localises to the cytoplasm. It carries out the reaction (R)-4'-phosphopantetheine + ATP + H(+) = 3'-dephospho-CoA + diphosphate. Its pathway is cofactor biosynthesis; coenzyme A biosynthesis. Its function is as follows. Reversibly transfers an adenylyl group from ATP to 4'-phosphopantetheine, yielding dephospho-CoA (dPCoA) and pyrophosphate. The polypeptide is Phosphopantetheine adenylyltransferase (Methanothermobacter thermautotrophicus (strain ATCC 29096 / DSM 1053 / JCM 10044 / NBRC 100330 / Delta H) (Methanobacterium thermoautotrophicum)).